Consider the following 555-residue polypeptide: B3 domain-containing protein REM10 (555 aa).

4 consecutive DNA-binding regions (TF-B3) follow at residues 11 to 103 (NPQF…LGPS), 150 to 247 (CFVA…FPMT), 276 to 372 (SFVA…LPLN), and 460 to 554 (SQNR…FCSK).

It localises to the nucleus. This Arabidopsis thaliana (Mouse-ear cress) protein is B3 domain-containing protein REM10 (REM10).